The sequence spans 250 residues: MSGKDRINVFPSRMALTLMKARLKGAQKGHSLLKRKADALTLRFRQILGKIIETKTLMGEVMKEATFSLAEAKFVAGDFSEMVLQNVDKAKIRLHTKKDNVAGVTLPVFETYSDGSDTYELTGLSRGGQLVSKCKEVFGKAVRLLVELASLQTAFVTLDEVIKVTNRRVNAIEHVIIPKIQRTLSYISIELDEREREEFYRLKKIQEKKKKQKAIKEKETEIRIARQKNKKSAAPVKTIFETGNDDDLLF.

It belongs to the V-ATPase D subunit family. In terms of assembly, V-ATPase is a heteromultimeric enzyme made up of two complexes: the ATP-hydrolytic V1 complex and the proton translocation V0 complex. The V1 complex consists of three catalytic AB heterodimers that form a heterohexamer, three peripheral stalks each consisting of EG heterodimers, one central rotor including subunits D and F, and the regulatory subunits C and H. The proton translocation complex V0 consists of the proton transport subunit a, a ring of proteolipid subunits c9c'', rotary subunit d, subunits e and f, and two accessory subunits ATP6AP1/Ac45 and ATP6AP2/PRR.

Its function is as follows. Subunit of the V1 complex of vacuolar(H+)-ATPase (V-ATPase), a multisubunit enzyme composed of a peripheral complex (V1) that hydrolyzes ATP and a membrane integral complex (V0) that translocates protons. V-ATPase is responsible for acidifying and maintaining the pH of intracellular compartments and in some cell types, is targeted to the plasma membrane, where it is responsible for acidifying the extracellular environment. The polypeptide is V-type proton ATPase subunit D (VATPD) (Suberites domuncula (Sponge)).